The following is a 138-amino-acid chain: Putative pre-16S rRNA nuclease (138 aa).

This sequence belongs to the YqgF nuclease family.

The protein resides in the cytoplasm. Could be a nuclease involved in processing of the 5'-end of pre-16S rRNA. This Clostridium tetani (strain Massachusetts / E88) protein is Putative pre-16S rRNA nuclease.